A 578-amino-acid polypeptide reads, in one-letter code: Sulfite reductase [NADPH] hemoprotein beta-component (578 aa).

Over residues 1–11 (MSANQQSNSQE) the composition is skewed to polar residues. Positions 1–20 (MSANQQSNSQEVLGEVLGPL) are disordered. The [4Fe-4S] cluster site is built by Cys441, Cys447, Cys487, and Cys491. Cys491 provides a ligand contact to siroheme.

Belongs to the nitrite and sulfite reductase 4Fe-4S domain family. Alpha(8)-beta(8). The alpha component is a flavoprotein, the beta component is a hemoprotein. Siroheme is required as a cofactor. [4Fe-4S] cluster serves as cofactor.

The enzyme catalyses hydrogen sulfide + 3 NADP(+) + 3 H2O = sulfite + 3 NADPH + 4 H(+). The protein operates within sulfur metabolism; hydrogen sulfide biosynthesis; hydrogen sulfide from sulfite (NADPH route): step 1/1. Component of the sulfite reductase complex that catalyzes the 6-electron reduction of sulfite to sulfide. This is one of several activities required for the biosynthesis of L-cysteine from sulfate. The protein is Sulfite reductase [NADPH] hemoprotein beta-component of Vibrio campbellii (strain ATCC BAA-1116).